We begin with the raw amino-acid sequence, 232 residues long: tRNA (guanine-N(7)-)-methyltransferase (232 aa).

Residues Glu63, Glu88, Asp115, and Asp137 each contribute to the S-adenosyl-L-methionine site. Asp137 is an active-site residue. Substrate-binding positions include Lys141, Asp173, and 211-214; that span reads TRYE.

The protein belongs to the class I-like SAM-binding methyltransferase superfamily. TrmB family.

The enzyme catalyses guanosine(46) in tRNA + S-adenosyl-L-methionine = N(7)-methylguanosine(46) in tRNA + S-adenosyl-L-homocysteine. It participates in tRNA modification; N(7)-methylguanine-tRNA biosynthesis. Catalyzes the formation of N(7)-methylguanine at position 46 (m7G46) in tRNA. The chain is tRNA (guanine-N(7)-)-methyltransferase from Rhizobium meliloti (strain 1021) (Ensifer meliloti).